Reading from the N-terminus, the 395-residue chain is Putative pyridoxal phosphate-dependent acyltransferase (395 aa).

Residue 110–111 participates in pyridoxal 5'-phosphate binding; the sequence is GF. Substrate is bound at residue His135. Residues Ser185, 210–213, and 240–243 each bind pyridoxal 5'-phosphate; these read DDAH and TLSK. Lys243 is subject to N6-(pyridoxal phosphate)lysine. Thr357 is a substrate binding site.

The protein belongs to the class-II pyridoxal-phosphate-dependent aminotransferase family. Homodimer. It depends on pyridoxal 5'-phosphate as a cofactor.

This is Putative pyridoxal phosphate-dependent acyltransferase from Staphylococcus aureus (strain Mu50 / ATCC 700699).